Here is a 364-residue protein sequence, read N- to C-terminus: MKTNLLNYDLQGLTRHFADMGEKPFRAKQVMRWMHQSGAQNFDEMTDLAKSLRHKLNEQAGIEIPKLMMSQKSSDGTRKWLLDVGTGNGVETVFIPESDRGTLCISSQVGCALECTFCSTGRQGFNRNLTAAEIIGQLWWANKAMGVTPKNERVISNVVMMGMGEPMANFDNVVTALSIMLDDHGYGLSRRRVTVSTSGMVPQMDRLRDVMPVALAVSLHASNDEVRNQIVPLNKKYPLKELMAACQRYLVKAPRDFITFEYVMLDGINDKAQHARELIELVTDVPCKFNLIPFNPFPNSGYERSSNENIRVFRDILQQAGFVVTVRKTRGDDIDAACGQLAGQVQDKTRRQQKWQQILIGQQG.

E91 acts as the Proton acceptor in catalysis. In terms of domain architecture, Radical SAM core spans 97 to 333; the sequence is ESDRGTLCIS…VTVRKTRGDD (237 aa). Residues C104 and C338 are joined by a disulfide bond. 3 residues coordinate [4Fe-4S] cluster: C111, C115, and C118. S-adenosyl-L-methionine-binding positions include 164-165, S196, 218-220, and N295; these read GE and SLH. Catalysis depends on C338, which acts as the S-methylcysteine intermediate.

Belongs to the radical SAM superfamily. RlmN family. [4Fe-4S] cluster is required as a cofactor.

Its subcellular location is the cytoplasm. It carries out the reaction adenosine(2503) in 23S rRNA + 2 reduced [2Fe-2S]-[ferredoxin] + 2 S-adenosyl-L-methionine = 2-methyladenosine(2503) in 23S rRNA + 5'-deoxyadenosine + L-methionine + 2 oxidized [2Fe-2S]-[ferredoxin] + S-adenosyl-L-homocysteine. The enzyme catalyses adenosine(37) in tRNA + 2 reduced [2Fe-2S]-[ferredoxin] + 2 S-adenosyl-L-methionine = 2-methyladenosine(37) in tRNA + 5'-deoxyadenosine + L-methionine + 2 oxidized [2Fe-2S]-[ferredoxin] + S-adenosyl-L-homocysteine. In terms of biological role, specifically methylates position 2 of adenine 2503 in 23S rRNA and position 2 of adenine 37 in tRNAs. m2A2503 modification seems to play a crucial role in the proofreading step occurring at the peptidyl transferase center and thus would serve to optimize ribosomal fidelity. The polypeptide is Dual-specificity RNA methyltransferase RlmN (Neisseria meningitidis serogroup B (strain ATCC BAA-335 / MC58)).